A 279-amino-acid chain; its full sequence is MALLTAKRPKKEAAPATDTSNNESDSEDSQNVDGDTGANAGWADCIGKVLKSKSVGPTVLSRAKKNPAVVRSKTSEAAKKPGFDFEVVGGDVKEEDDDDEEDGDADKSALDATLTKTERRNVPLQLRVKPSYQDLERERTLRKVATRGVVQFFNAVRIQQKDLEQQLADAGPLDSRQDAVLNNINKRKFLDVLMSGKRAKSTAIDNAVKKEEQETDDDDEDDTAEASSTGKKKSEWNVLREDFMTNKKIKHWDEEDDEGSDQGANNDEADDSDDDDEED.

Disordered regions lie at residues M1–A40, G56–R120, and K200–D279. A compositionally biased stretch (basic and acidic residues) spans K73–F83. Composition is skewed to acidic residues over residues K93 to D104 and Q213 to A224. The span at K232–T245 shows a compositional bias: basic and acidic residues. Acidic residues predominate over residues D267–D279.

It belongs to the RRP15 family.

This chain is RRP15-like protein, found in Drosophila pseudoobscura pseudoobscura (Fruit fly).